The following is a 374-amino-acid chain: Pectate lyase 3 (374 aa).

Positions 1 to 22 (MKYLLPSAAAGLLLLAAQPTMA) are cleaved as a signal peptide. An intrachain disulfide couples C93 to C176. Residues D150, D152, E187, and D191 each coordinate Ca(2+). R239 is a catalytic residue. C350 and C373 are oxidised to a cystine.

The protein belongs to the polysaccharide lyase 1 family. PLADES subfamily. Ca(2+) is required as a cofactor.

Its subcellular location is the secreted. It catalyses the reaction Eliminative cleavage of (1-&gt;4)-alpha-D-galacturonan to give oligosaccharides with 4-deoxy-alpha-D-galact-4-enuronosyl groups at their non-reducing ends.. It functions in the pathway glycan metabolism; pectin degradation; 2-dehydro-3-deoxy-D-gluconate from pectin: step 2/5. Functionally, involved in maceration and soft-rotting of plant tissue. This chain is Pectate lyase 3 (pel3), found in Pectobacterium carotovorum subsp. carotovorum (Erwinia carotovora subsp. carotovora).